The primary structure comprises 164 residues: Pyruvoyl-dependent arginine decarboxylase (164 aa).

The residue at position 52 (serine 52) is a Pyruvic acid (Ser).

The protein belongs to the PdaD family. It depends on pyruvate as a cofactor.

The enzyme catalyses L-arginine + H(+) = agmatine + CO2. The polypeptide is Pyruvoyl-dependent arginine decarboxylase (Methanococcus maripaludis (strain C5 / ATCC BAA-1333)).